The primary structure comprises 547 residues: Chaperonin GroEL (547 aa).

ATP is bound by residues 30-33 (TLGP), Lys-51, 87-91 (DGTTT), Gly-415, 479-481 (NAA), and Asp-495. Residues 526–547 (KEEKSDLSVPPQGGMGGMGGMM) are disordered. The span at 538–547 (GGMGGMGGMM) shows a compositional bias: gly residues.

Belongs to the chaperonin (HSP60) family. In terms of assembly, forms a cylinder of 14 subunits composed of two heptameric rings stacked back-to-back. Interacts with the co-chaperonin GroES.

It localises to the cytoplasm. The enzyme catalyses ATP + H2O + a folded polypeptide = ADP + phosphate + an unfolded polypeptide.. Together with its co-chaperonin GroES, plays an essential role in assisting protein folding. The GroEL-GroES system forms a nano-cage that allows encapsulation of the non-native substrate proteins and provides a physical environment optimized to promote and accelerate protein folding. The polypeptide is Chaperonin GroEL (Buchnera aphidicola subsp. Tetraneura caerulescens).